A 1948-amino-acid chain; its full sequence is MGVKKKKEMQVTALTICHQDLETLRFLADVEGKNLASLLLYCVQLTDGVSQIHYVKQIVPLLEKADKNGACDPIIRSCLDILAGIYLSLSVKNPLKKVLASSLNGLPEFFLTEAIQSFTSRLQEELNTTDLYSYRKVIDNISSCMENFDLGRAGVNNLLKNVLHFLQKSLIEISEENRKFAGNRIVQTQLMNDLLVGTRVSVMLVQKIQDIQRIHLKTSSSPTWQSMCGLLSIFTKFLSDDDLLQTIQSTSGLAVILFIKAMFHPPEKIPDLISSLLLRSVDCTSIPDWFLNCCRSLCCTDVSQSTLLFLCQGTLTMLDWQNGSMDLSGEALLLNIVHILFTLSSQIKESTLELFLSRILASWTNSAIHVLKSSSPSLKNSLNGKSSVVGRLLEYVYTHWEHPLDALRHQTKIIFRNILQMHQLTKEKSNSEVSGLAADHFICDLTEGLLRLEWHVKGKYTCLGCLVDYIGIGHILALAKTIPSQILEVMGDQSLVPYASDLLETMFRSHKNHLKSQALDSTWIDEWHETWVSPLLFILCEGNLDQKSYVIDYYLPKLLNCSPESLSYMVKILQTSADAKTGSYNSRGALGALMACLRTARAHGHLQSATDTWRNLVSSARIKQGLIHQHCQVRIDTLGLLCESNRSTEIVSTEEMQWIQFFITYNLNSQSPGVRQQICSLLKKLFCRIQESSQVLYKQEQSRSKHEPENELTKQHPSVSLQQYKNFMSSICSHLFEALFPGSSYPTRFSALTILGSIAEVFPVTEGQVQAVYQLSHDIDVGRFQTLMECFTSTFEEVKILAFDLLMKLPKTVVQFQDSEKLQGLFQAALELSSSTKPYDCVTASYLLNFLIWQDVLPSSLFDSLKTQQTACEDGDKSAIVVERNTLMVIKCLLENLEEEVSQAENSLLQAAASFPLYGRVHCVTGALQRLSLNNLQLVSEWRPVIEKLLLMSYRLSAVVSPVIQSSSPEGLIPMDTDSESASRLQTILNEIQPRDTNDYFTQAKILKEHDSFDLEDLNVSVQNIGASAEVKGKERKTCDVTAQMVLVCCWRSMKEVALLLGTLCQLLPMQSVPESSNGLLTEEQVKEIGDYFKQHLLQSRHRGAFELAYTGFVKLTEILNRCPNVSLQKLPEQWLWNVLEEIKCSDPSSKLCATRRSAGIPFYIQALLASEPKKGKMDLLKITMKELISLAGPTDDSQSTVPQVHALNILRALFRDTRLGENIIPYVADGAKAAILGFTSPVWAVRNSSTLLFSTLITRIFGVKRGKDELSKKNRMTGSEFFSRFPELYPFLLQQLEAVANTVDSDTGELNRHPSMFLLLLVLGRLYPSPMDGTYSALSMAPFIPFIMRCGRSPDYRSREMAARALVPFVMVDEIPTTIRTLLAKLPNCTDQRFRQNHIHGTLLQVFHLLQAFTDSKYRLNTYFQQELADVAVCTRAKLWLAERQNPCLVTRAVYIDILFLLTRCLDKPTKGNQPAVECLGFWEDVRRIISGSELITGFTYTFTVPGLPQYLQSLTKLAITTAAVAAQAGEQAGNIPISFSQLLESSFPEVRLLTLEALLERFSTAALGLGEKGLPPLQRNMGETFLMLAVKENHPECFCKILKILHCMDPSEWLSHMQRCIHLTPKEFLIWTMDIASNERSEVQSVALRLASRVIAHHLQMCEETRDSVAPTLKQWVQLVVSSCGEHLPTESRLAAAEALTSTTPFLLTSPHPVLGLQDTLALWRCVLTLLQSEEQAVRDAATGTVVTAMSQENTCRSTEFAFCQVDASIALTLALAVLCDLLQQWDQLALGLPVLLGWLLGEDDDFVVHLENTHQVEDYLFEKAEINFWAETLIFVKYLHEHLLRLLSTSSRRPLSPESLRHLRRTASEQGHLLSQLFRELPPAAEFLKTVEFTRLRIQEERTLACLQLLAFLEGKEREDTPVLRASDSPAEANQFTLAKTETAH.

A coiled-coil region spans residues 883–915 (ERNTLMVIKCLLENLEEEVSQAENSLLQAAASF). Phosphoserine occurs at positions 1012, 1021, and 1158. A disordered region spans residues 1924–1948 (TPVLRASDSPAEANQFTLAKTETAH). Residues 1935-1948 (EANQFTLAKTETAH) show a composition bias toward polar residues.

The protein belongs to the THADA family.

Its function is as follows. Together with methyltransferase FTSJ1, methylates the 2'-O-ribose of nucleotides at position 32 of the anticodon loop of substrate tRNAs. This is tRNA (32-2'-O)-methyltransferase regulator THADA (THADA) from Canis lupus familiaris (Dog).